Consider the following 384-residue polypeptide: dTDP-dihydrostreptose--streptidine-6-phosphate dihydrostreptosyltransferase (384 aa).

It catalyses the reaction dTDP-L-dihydrostreptose + streptidine 6-phosphate = O-(1-&gt;4)-alpha-L-dihydrostreptosyl-streptidine 6-phosphate + dTDP + H(+). Its pathway is antibiotic biosynthesis; streptomycin biosynthesis. Is probably a dihydrostreptosyl glycosyltransferase, involved in the first glycosylation step condensing streptidine-6-phosphate and dihydrostreptose. The chain is dTDP-dihydrostreptose--streptidine-6-phosphate dihydrostreptosyltransferase (strH) from Streptomyces griseus.